The sequence spans 127 residues: Sulfiredoxin (127 aa).

Belongs to the sulfiredoxin family. The cofactor is Mg(2+). Forms a transient disulfide bond with TSA1 during the reduction of cysteine sulfinic acid (-SO2H).

Its subcellular location is the cytoplasm. The protein resides in the nucleus. The catalysed reaction is S-hydroxy-S-oxy-L-cysteinyl-[peroxiredoxin] + [protein]-dithiol + ATP = S-hydroxy-L-cysteinyl-[peroxiredoxin] + [protein]-disulfide + ADP + phosphate. Functionally, contributes to oxidative stress resistance by reducing cysteine-sulfinic acid formed under exposure to oxidants in the peroxiredoxin TSA1. May catalyze the reduction in a multi-step process by acting both as a specific phosphotransferase and as thioltransferase. In Saccharomyces cerevisiae (strain ATCC 204508 / S288c) (Baker's yeast), this protein is Sulfiredoxin.